The sequence spans 494 residues: Protein DETOXIFICATION 23 (494 aa).

The interval 1 to 25 (MARREGEVTETLLKKSTENRGEDRD) is disordered. 12 helical membrane-spanning segments follow: residues 40–60 (LWVVAGPAIFTRFSTSGLSLI), 74–94 (AAYSITLTVLLRFSNGILLGM), 123–143 (IVLTGCTICLMPIYIFAGPIL), 158–178 (IIALWVIGINISFVPSFTCQM), 188–208 (IIAYVAAVSLGVHVFLSWLLV), 223–243 (LVAHWLPNIAQVLFVTCGGCT), 268–288 (GGMICLELWYNSILILLTGNL), 297–317 (ALAICININALEMMVAFGFMA), 340–360 (MVVVSTSLSIGIIFFFIFLFL), 384–404 (LLAFSILLNSIQPVLSGVAVG), 416–436 (LACYYLVGIPSGLFLGYVVGL), and 441–461 (VWLGMIFGIFVQTCVLTVMTM).

The protein belongs to the multi antimicrobial extrusion (MATE) (TC 2.A.66.1) family.

It is found in the membrane. This Arabidopsis thaliana (Mouse-ear cress) protein is Protein DETOXIFICATION 23.